Consider the following 384-residue polypeptide: Galactokinase (384 aa).

Substrate is bound at residue 34-37; that stretch reads EHTD. 123-129 is a binding site for ATP; the sequence is SSGLSSS. Residues serine 129 and glutamate 161 each contribute to the Mg(2+) site. Aspartate 173 acts as the Proton acceptor in catalysis. Residue tyrosine 222 coordinates substrate.

Belongs to the GHMP kinase family. GalK subfamily.

The protein resides in the cytoplasm. It catalyses the reaction alpha-D-galactose + ATP = alpha-D-galactose 1-phosphate + ADP + H(+). It participates in carbohydrate metabolism; galactose metabolism. Functionally, catalyzes the transfer of the gamma-phosphate of ATP to D-galactose to form alpha-D-galactose-1-phosphate (Gal-1-P). The protein is Galactokinase of Haemophilus influenzae (strain ATCC 51907 / DSM 11121 / KW20 / Rd).